A 332-amino-acid polypeptide reads, in one-letter code: Beta-1,3-N-acetylglucosaminyltransferase radical fringe (332 aa).

At 1–6 (MSRARR) the chain is on the cytoplasmic side. A helical; Signal-anchor for type II membrane protein membrane pass occupies residues 7–29 (VLCRACLALAAVLAVLLLLPLPL). At 30 to 332 (PLPLPRAPAP…MKNRVEGAFQ (303 aa)) the chain is on the lumenal side. Arginine 75 provides a ligand contact to substrate. N-linked (GlcNAc...) asparagine glycosylation occurs at asparagine 114. 2 cysteine pairs are disulfide-bonded: cysteine 115-cysteine 126 and cysteine 144-cysteine 208. Aspartate 148 provides a ligand contact to substrate. Residue aspartate 149 participates in Mn(2+) binding. The active site involves aspartate 238. Histidine 262 is a Mn(2+) binding site. A disulfide bond links cysteine 312 and cysteine 321.

It belongs to the glycosyltransferase 31 family. Requires Mn(2+) as cofactor. As to expression, detected in all the examined tissues (12.5 dpc). High expression found in adult brain.

The protein localises to the golgi apparatus membrane. The enzyme catalyses 3-O-(alpha-L-fucosyl)-L-threonyl-[EGF-like domain protein] + UDP-N-acetyl-alpha-D-glucosamine = 3-O-(N-acetyl-beta-D-glucosaminyl-(1-&gt;3)-alpha-L-fucosyl)-L-threonyl-[EGF-like domain protein] + UDP + H(+). The catalysed reaction is 3-O-(alpha-L-fucosyl)-L-seryl-[EGF-like domain protein] + UDP-N-acetyl-alpha-D-glucosamine = 3-O-(N-acetyl-beta-D-glucosaminyl-(1-&gt;3)-alpha-L-fucosyl)-L-seryl-[EGF-like domain protein] + UDP + H(+). Its function is as follows. Glycosyltransferase that initiates the elongation of O-linked fucose residues attached to EGF-like repeats in the extracellular domain of Notch molecules. Modulates NOTCH1 activity by modifying O-fucose residues at specific EGF-like domains resulting in enhancement of NOTCH1 activation by DLL1 and JAG1. May be involved in limb formation and in neurogenesis. This Mus musculus (Mouse) protein is Beta-1,3-N-acetylglucosaminyltransferase radical fringe.